We begin with the raw amino-acid sequence, 924 residues long: Periplasmic nitrate reductase (924 aa).

Residues 1–30 constitute a signal peptide (tat-type signal); the sequence is MNRRDFIKNTAIASAASVAGLSVPSSMLGA. Positions 35–91 constitute a 4Fe-4S Mo/W bis-MGD-type domain; the sequence is WKWDKAVCRFCGTGCGIMIARKDGKIVATKGDPAAPVNRGLNCIKGYFNAKIMYGED. [4Fe-4S] cluster is bound by residues Cys-42, Cys-45, Cys-49, and Cys-77. Residues Lys-79, Gln-147, Asn-172, Cys-176, 209–216, Met-417, Gln-421, Asn-527, 552–553, Lys-575, Asp-602, and 814–823 contribute to the Mo-bis(molybdopterin guanine dinucleotide) site; these read WGANMAEM, SD, and TGRVLEHWHS. Residue Trp-890 coordinates substrate. Residues Asn-898 and Lys-915 each coordinate Mo-bis(molybdopterin guanine dinucleotide).

The protein belongs to the prokaryotic molybdopterin-containing oxidoreductase family. NasA/NapA/NarB subfamily. In terms of assembly, component of the periplasmic nitrate reductase NapAB complex composed of NapA and NapB. It depends on [4Fe-4S] cluster as a cofactor. Requires Mo-bis(molybdopterin guanine dinucleotide) as cofactor. Predicted to be exported by the Tat system. The position of the signal peptide cleavage has not been experimentally proven.

The protein localises to the periplasm. The enzyme catalyses 2 Fe(II)-[cytochrome] + nitrate + 2 H(+) = 2 Fe(III)-[cytochrome] + nitrite + H2O. In terms of biological role, catalytic subunit of the periplasmic nitrate reductase complex NapAB. Receives electrons from NapB and catalyzes the reduction of nitrate to nitrite. This Campylobacter jejuni subsp. jejuni serotype O:2 (strain ATCC 700819 / NCTC 11168) protein is Periplasmic nitrate reductase.